The primary structure comprises 188 residues: Elongation factor P (188 aa).

Lys-34 is modified (N6-(3,6-diaminohexanoyl)-5-hydroxylysine).

Belongs to the elongation factor P family. Post-translationally, may be beta-lysylated on the epsilon-amino group of Lys-34 by the combined action of EpmA and EpmB, and then hydroxylated on the C5 position of the same residue by EpmC (if this protein is present). Lysylation is critical for the stimulatory effect of EF-P on peptide-bond formation. The lysylation moiety may extend toward the peptidyltransferase center and stabilize the terminal 3-CCA end of the tRNA. Hydroxylation of the C5 position on Lys-34 may allow additional potential stabilizing hydrogen-bond interactions with the P-tRNA.

It localises to the cytoplasm. The protein operates within protein biosynthesis; polypeptide chain elongation. Its function is as follows. Involved in peptide bond synthesis. Alleviates ribosome stalling that occurs when 3 or more consecutive Pro residues or the sequence PPG is present in a protein, possibly by augmenting the peptidyl transferase activity of the ribosome. Modification of Lys-34 is required for alleviation. The sequence is that of Elongation factor P from Photorhabdus laumondii subsp. laumondii (strain DSM 15139 / CIP 105565 / TT01) (Photorhabdus luminescens subsp. laumondii).